The chain runs to 222 residues: Putative metal transport protein MJ1569 (222 aa).

6 helical membrane-spanning segments follow: residues 3-23, 39-59, 81-101, 102-122, 135-155, and 180-200; these read IPDG…MIPI, LPLL…NLPV, WVAT…FGDG, GITC…FVGY, VIAS…VAGF, and AFAH…IVVW.

This sequence belongs to the CbiM family.

It is found in the cell membrane. Functionally, may be involved in metal transport. This Methanocaldococcus jannaschii (strain ATCC 43067 / DSM 2661 / JAL-1 / JCM 10045 / NBRC 100440) (Methanococcus jannaschii) protein is Putative metal transport protein MJ1569.